Consider the following 179-residue polypeptide: Peptide deformylase (179 aa).

Cysteine 102 and histidine 144 together coordinate Fe cation. Glutamate 145 is an active-site residue. Histidine 148 is a binding site for Fe cation.

The protein belongs to the polypeptide deformylase family. Fe(2+) serves as cofactor.

The enzyme catalyses N-terminal N-formyl-L-methionyl-[peptide] + H2O = N-terminal L-methionyl-[peptide] + formate. Its function is as follows. Removes the formyl group from the N-terminal Met of newly synthesized proteins. Requires at least a dipeptide for an efficient rate of reaction. N-terminal L-methionine is a prerequisite for activity but the enzyme has broad specificity at other positions. This is Peptide deformylase from Wolbachia pipientis wMel.